A 506-amino-acid chain; its full sequence is MDTIKINPEFDGQFCKTTSLLDPEEFRRNGHMMVDFLADYFHNIEKYPVRSQVEPGYLERLLPDSAPIQPEPIEKILKDVRSDIFPGLTHWQSPNFFAYFPCSSSTAGILGEMLSAGLNVVGFSWIASPAATELESIVMDWLGKLINLPKTYLFSGGGGGVMQGTTCEVMLCTIVAARDKMLEKFGRENIDKLVVYASDQTHFSFQKAVKISGIKPENFRAIPTTKATEFSLNPESLRRAIQEDKKAGLIPLFLCTSIGTTSTTAVDPLKPLCEIAEEYGIWVHVDAAYAGSACICPEFQHFLDGVEHANSFSFNAHKWLFTTLDCCCLWLKDPSSLTKALSTNPEVLRNDATDSEQVVDYKDWQITLSRRFRSLKLWLVLKSYGVANLRNFIRSHIEMAKHFEELVAMDERFEIMAPRNFSLVCFRVSLLALEKKFNFVDETQVNEFNAKLLESIISSGNVYMTHTVVEGVYMIRFAVGAPLTDYPHIDMAWNVVRNHATMMLNA.

L-phenylalanine is bound by residues Pro101, His202, and His317. N6-(pyridoxal phosphate)lysine is present on Lys318.

The protein belongs to the group II decarboxylase family. As to quaternary structure, homotetramer. Pyridoxal 5'-phosphate serves as cofactor. As to expression, highly expressed in corolla limbs and at lower levels in corolla tubes and ovaries.

The enzyme catalyses L-phenylalanine + O2 + H2O + H(+) = 2-phenylacetaldehyde + H2O2 + NH4(+) + CO2. Functionally, bifunctional enzyme that catalyzes the decarboxylation of L-phenylalanine to 2-phenylethylamine, which is then oxidized to form 2-phenylacetaldehyde, a constituent of floral scent. 2-phenylacetaldehyde is a precursor of 2-phenylethanol, another constituent of floral scent. The chain is Phenylacetaldehyde synthase from Petunia hybrida (Petunia).